A 228-amino-acid polypeptide reads, in one-letter code: 7-cyano-7-deazaguanine synthase (228 aa).

Position 9 to 19 (9 to 19) interacts with ATP; that stretch reads LSGGPDSTTVL. Zn(2+)-binding residues include C193, C203, C206, and C209.

It belongs to the QueC family. Zn(2+) is required as a cofactor.

The enzyme catalyses 7-carboxy-7-deazaguanine + NH4(+) + ATP = 7-cyano-7-deazaguanine + ADP + phosphate + H2O + H(+). It participates in purine metabolism; 7-cyano-7-deazaguanine biosynthesis. Its function is as follows. Catalyzes the ATP-dependent conversion of 7-carboxy-7-deazaguanine (CDG) to 7-cyano-7-deazaguanine (preQ(0)). The sequence is that of 7-cyano-7-deazaguanine synthase from Rickettsia peacockii (strain Rustic).